Consider the following 35-residue polypeptide: U2-agatoxin-Aop1a (35 aa).

Cystine bridges form between Cys-3-Cys-19, Cys-10-Cys-24, and Cys-18-Cys-34. A Leucine amide modification is found at Leu-35.

The protein belongs to the neurotoxin 01 (U2-agtx) family. In terms of tissue distribution, expressed by the venom gland.

The protein resides in the secreted. Insect-selective toxin causing rapid but reversible paralysis in crickets. Suppresses the excitatory postsynaptic potentials evoked in lobster neuromuscular synaptic preparations, possibly by blocking the presynaptic calcium channel (Cav). Induces instantaneous reversible paralysis when injected into crickets. The polypeptide is U2-agatoxin-Aop1a (Allagelena opulenta (Funnel weaving spider)).